The sequence spans 122 residues: Large ribosomal subunit protein uL14c (122 aa).

The protein belongs to the universal ribosomal protein uL14 family. As to quaternary structure, part of the 50S ribosomal subunit.

It localises to the plastid. The protein resides in the chloroplast. Binds to 23S rRNA. This is Large ribosomal subunit protein uL14c from Populus trichocarpa (Western balsam poplar).